Reading from the N-terminus, the 263-residue chain is 3-methyl-2-oxobutanoate hydroxymethyltransferase (263 aa).

Residues Asp45 and Asp84 each contribute to the Mg(2+) site. 3-methyl-2-oxobutanoate is bound by residues 45 to 46 (DS), Asp84, and Lys112. Glu114 is a binding site for Mg(2+). Catalysis depends on Glu180, which acts as the Proton acceptor.

Belongs to the PanB family. In terms of assembly, homodecamer; pentamer of dimers. Mg(2+) is required as a cofactor.

The protein localises to the cytoplasm. It carries out the reaction 3-methyl-2-oxobutanoate + (6R)-5,10-methylene-5,6,7,8-tetrahydrofolate + H2O = 2-dehydropantoate + (6S)-5,6,7,8-tetrahydrofolate. The protein operates within cofactor biosynthesis; (R)-pantothenate biosynthesis; (R)-pantoate from 3-methyl-2-oxobutanoate: step 1/2. Functionally, catalyzes the reversible reaction in which hydroxymethyl group from 5,10-methylenetetrahydrofolate is transferred onto alpha-ketoisovalerate to form ketopantoate. This chain is 3-methyl-2-oxobutanoate hydroxymethyltransferase, found in Salmonella enteritidis PT4 (strain P125109).